A 107-amino-acid polypeptide reads, in one-letter code: Thiosulfate sulfurtransferase GlpE (107 aa).

Residues 17–105 (ADDNALLVDI…WRIAFPQQVS (89 aa)) form the Rhodanese domain. Cysteine 65 functions as the Cysteine persulfide intermediate in the catalytic mechanism.

The protein belongs to the GlpE family.

It localises to the cytoplasm. It carries out the reaction thiosulfate + hydrogen cyanide = thiocyanate + sulfite + 2 H(+). The catalysed reaction is thiosulfate + [thioredoxin]-dithiol = [thioredoxin]-disulfide + hydrogen sulfide + sulfite + 2 H(+). In terms of biological role, transferase that catalyzes the transfer of sulfur from thiosulfate to thiophilic acceptors such as cyanide or dithiols. May function in a CysM-independent thiosulfate assimilation pathway by catalyzing the conversion of thiosulfate to sulfite, which can then be used for L-cysteine biosynthesis. This chain is Thiosulfate sulfurtransferase GlpE, found in Erwinia tasmaniensis (strain DSM 17950 / CFBP 7177 / CIP 109463 / NCPPB 4357 / Et1/99).